Here is a 73-residue protein sequence, read N- to C-terminus: Large ribosomal subunit protein bL31 (73 aa).

Belongs to the bacterial ribosomal protein bL31 family. Type A subfamily. Part of the 50S ribosomal subunit.

Binds the 23S rRNA. The polypeptide is Large ribosomal subunit protein bL31 (Agrobacterium fabrum (strain C58 / ATCC 33970) (Agrobacterium tumefaciens (strain C58))).